Consider the following 471-residue polypeptide: Cysteine--tRNA ligase (471 aa).

Residue cysteine 30 participates in Zn(2+) binding. Positions 32–42 (PTVYNFAHIGN) match the 'HIGH' region motif. Residues cysteine 212, histidine 237, and glutamate 241 each contribute to the Zn(2+) site. Residues 270 to 274 (KMSKS) carry the 'KMSKS' region motif. Residue lysine 273 coordinates ATP.

It belongs to the class-I aminoacyl-tRNA synthetase family. As to quaternary structure, monomer. Requires Zn(2+) as cofactor.

The protein resides in the cytoplasm. The enzyme catalyses tRNA(Cys) + L-cysteine + ATP = L-cysteinyl-tRNA(Cys) + AMP + diphosphate. The polypeptide is Cysteine--tRNA ligase (Leptospira interrogans serogroup Icterohaemorrhagiae serovar Lai (strain 56601)).